We begin with the raw amino-acid sequence, 361 residues long: Cyclin-D3-3 (361 aa).

It belongs to the cyclin family. Cyclin D subfamily.

Promotes divisions in the guard cells (GCs) after the guard mother cells (GMC) symmetric division. The sequence is that of Cyclin-D3-3 (CYCD3-3) from Arabidopsis thaliana (Mouse-ear cress).